Here is a 502-residue protein sequence, read N- to C-terminus: ATP synthase subunit alpha (502 aa).

A disordered region spans residues 115 to 135 (VDGLGPINTTNTRPIESPAPG). Residue 169–176 (GDRQTGKT) participates in ATP binding.

Belongs to the ATPase alpha/beta chains family. In terms of assembly, F-type ATPases have 2 components, CF(1) - the catalytic core - and CF(0) - the membrane proton channel. CF(1) has five subunits: alpha(3), beta(3), gamma(1), delta(1), epsilon(1). CF(0) has three main subunits: a(1), b(2) and c(9-12). The alpha and beta chains form an alternating ring which encloses part of the gamma chain. CF(1) is attached to CF(0) by a central stalk formed by the gamma and epsilon chains, while a peripheral stalk is formed by the delta and b chains.

Its subcellular location is the cell membrane. The enzyme catalyses ATP + H2O + 4 H(+)(in) = ADP + phosphate + 5 H(+)(out). Produces ATP from ADP in the presence of a proton gradient across the membrane. The alpha chain is a regulatory subunit. The protein is ATP synthase subunit alpha of Bacillus cereus (strain G9842).